The following is a 261-amino-acid chain: tRNA pseudouridine synthase A (261 aa).

D51 (nucleophile) is an active-site residue. Position 109 (Y109) interacts with substrate.

Belongs to the tRNA pseudouridine synthase TruA family. Homodimer.

It carries out the reaction uridine(38/39/40) in tRNA = pseudouridine(38/39/40) in tRNA. In terms of biological role, formation of pseudouridine at positions 38, 39 and 40 in the anticodon stem and loop of transfer RNAs. This Shewanella sp. (strain MR-7) protein is tRNA pseudouridine synthase A.